A 1104-amino-acid polypeptide reads, in one-letter code: Nitrite reductase [NAD(P)H] (1104 aa).

44 to 79 (QKIVVVGLGMVAVAFIEKLVKLDSERRKYDIVVIGE) contributes to the FAD binding site. 146–176 (YDILVLATGSDAVLPTSTPGHDAKGIFVYRT) lines the NAD(+) pocket. Residues 396 to 419 (KFLPGQRPSAESIGAADPNREEEP) form a disordered region. [2Fe-2S] cluster is bound by residues Cys-500, Cys-502, Cys-535, and Cys-538. Positions 720, 726, 760, and 764 each coordinate [4Fe-4S] cluster. Cys-764 serves as a coordination point for siroheme. Positions 932–1040 (WQPVIKADYF…VEEREDGWIY (109 aa)) constitute a Rieske domain. [2Fe-2S] cluster-binding residues include Cys-976, His-978, Cys-1001, and His-1004. The interval 1081-1104 (GKRAGAKGIEGSKPTRSPSNTIDW) is disordered. Polar residues predominate over residues 1094–1104 (PTRSPSNTIDW).

Belongs to the nitrite and sulfite reductase 4Fe-4S domain family. As to quaternary structure, homodimer. The cofactor is siroheme. [4Fe-4S] cluster serves as cofactor. FAD is required as a cofactor. It depends on [2Fe-2S] cluster as a cofactor.

It catalyses the reaction NH4(+) + 3 NADP(+) + 2 H2O = nitrite + 3 NADPH + 5 H(+). The enzyme catalyses NH4(+) + 3 NAD(+) + 2 H2O = nitrite + 3 NADH + 5 H(+). The protein operates within nitrogen metabolism; nitrate reduction (assimilation). This is Nitrite reductase [NAD(P)H] (niiA) from Emericella nidulans (strain FGSC A4 / ATCC 38163 / CBS 112.46 / NRRL 194 / M139) (Aspergillus nidulans).